An 895-amino-acid chain; its full sequence is Zyg eleven-related protein 1 (895 aa).

2 disordered regions span residues 58–78 (HGPA…PDQG) and 195–221 (RGQM…SDHQ). Residues 205-220 (SPLSPSSQPSSIQSDH) are compositionally biased toward low complexity.

In terms of assembly, interacts with elc-1. Part of an E3 ubiquitin ligase complex including zer-11, cul-2 and elc-1.

In terms of biological role, acts as a target recruitment subunit in the E3 ubiquitin ligase complex zer-1-cul-2-elc-1. This Caenorhabditis elegans protein is Zyg eleven-related protein 1 (zer-1).